Reading from the N-terminus, the 558-residue chain is Cyclomaltodextrinase (558 aa).

Positions 143, 168, and 170 each coordinate Ca(2+). Residues histidine 243 and arginine 323 each contribute to the substrate site. Residue aspartate 325 is the Nucleophile of the active site. The Proton donor role is filled by glutamate 354. Substrate is bound by residues 420-421, aspartate 465, and arginine 469; that span reads HD.

This sequence belongs to the glycosyl hydrolase 13 family. As to quaternary structure, monomer. Depending on the pH of the solution, exists as a monomer, a homodimer or as an assembly of six homodimers forming a dodecamer, which is catalytically the most efficient form of the enzyme. Requires Ca(2+) as cofactor.

The catalysed reaction is cyclomaltodextrin + H2O = linear maltodextrin. It carries out the reaction Hydrolysis of pullulan to panose (6-alpha-D-glucosylmaltose).. With respect to regulation, hydrolysis of beta-cyclodextrin is inhibited by Cu(2+), Zn(2+) and Ag(+), and activated by Ca(2+), EGTA and EDTA. Activity is increased over twofold in the presence of 5 mM EDTA. Competitively inhibited by acarbose and methyl 6-amino-6-deoxy-alpha-D-glucopyranoside by reducing the rate of the ring opening step of the reaction. Its function is as follows. Hydrolyzes alpha-, beta- and gamma-cyclodextrins and the resulting linear maltodextrins, with the highest activity with beta-cyclodextrin (cyclomaltoheptaose). Soluble starch is hydrolyzed slowly, but it is nevertheless preferred over pullulan as a substrate. Is able to hydrolyze amylose and amylopectin, with a very strong preference for amylose, with maltose and glucose as the main products. Maltose and glucose are the main hydrolysis products of cyclomaltodextrins, maltodextrins and starch, whereas panose is the main hydrolysis product of pullulan. Acarbose is partially hydrolyzed to glucose and pseudotrisaccharide. No activity with maltose as substrate. Has transglycosylating activity with high concentrations of maltotriose, maltotetraose and starch. This Bacillus sp protein is Cyclomaltodextrinase.